The sequence spans 234 residues: Sugar fermentation stimulation protein homolog (234 aa).

It belongs to the SfsA family.

This chain is Sugar fermentation stimulation protein homolog, found in Edwardsiella ictaluri (strain 93-146).